The following is a 698-amino-acid chain: SHC SH2 domain-binding protein 1 homolog B (698 aa).

3 PbH1 repeats span residues 480 to 502 (CAEL…EIYP), 503 to 524 (GSKC…LIKD), and 532 to 554 (IPKI…VLVK).

Its subcellular location is the midbody. The protein resides in the cytoplasm. The protein localises to the cytoskeleton. It localises to the spindle. In terms of biological role, may play a role in signaling pathways governing cellular proliferation. In Xenopus laevis (African clawed frog), this protein is SHC SH2 domain-binding protein 1 homolog B (shcbp1-b).